A 514-amino-acid polypeptide reads, in one-letter code: Calcium-binding mitochondrial carrier protein SCaMC-2 (514 aa).

The Mitochondrial intermembrane portion of the chain corresponds to 1–234; that stretch reads MARPRSLVSP…EKQTGMWWRH (234 aa). EF-hand domains are found at residues 56-91, 92-122, 123-158, and 159-194; these read EHER…LGVH, RTEL…HYLR, DHEK…LGVN, and ISEQ…HSAE. Residues Asp69, Asn71, Asp73, Asp80, Asp105, Asp107, Asp109, Gln111, and Glu116 each contribute to the Ca(2+) site. Solcar repeat units lie at residues 229–315, 323–408, and 420–508; these read GMWW…IKRI, LGIH…LKNA, and PGVF…LKLT. The chain crosses the membrane as a helical span at residues 235-252; that stretch reads LVAGGGAGAVSRTCTAPL. Over 253–289 the chain is Mitochondrial matrix; the sequence is DRLKVLMQVHASRSNNMSILGGFTHMIREGGFRSLWR. A helical membrane pass occupies residues 290-309; it reads GNGINVIKIAPESAIKFMAY. Over 310-332 the chain is Mitochondrial intermembrane; the sequence is EQIKRIIGSNQETLGIHERFVAG. A helical transmembrane segment spans residues 333–346; the sequence is SLAGVIAQSSIYPM. The Mitochondrial matrix segment spans residues 347 to 382; that stretch reads EVLKTRMALRKTGQYQGVLDCGKKILLQEGLSAFYK. Residues 383–402 traverse the membrane as a helical segment; it reads GYVPNMLGIIPYAGIDLAVY. Residues 403–425 lie on the Mitochondrial intermembrane side of the membrane; it reads ETLKNAWLQRYATSSADPGVFVL. A helical membrane pass occupies residues 426–443; it reads LACGTVSSTCGQLASYPL. At 444–482 the chain is on the mitochondrial matrix side; that stretch reads ALVRTRMQAEASVEGAPQMTMSKLFKHIVKTEGAFGLYR. Residues 483–502 traverse the membrane as a helical segment; sequence GLAPNFMKVIPAVSISYVVY. The Mitochondrial intermembrane segment spans residues 503 to 514; the sequence is ENLKLTLGVQSR.

The protein belongs to the mitochondrial carrier (TC 2.A.29) family.

Its subcellular location is the mitochondrion inner membrane. Functionally, calcium-dependent mitochondrial solute carrier. The chain is Calcium-binding mitochondrial carrier protein SCaMC-2 (slc25a25) from Xenopus laevis (African clawed frog).